Here is a 328-residue protein sequence, read N- to C-terminus: Tetraacyldisaccharide 4'-kinase (328 aa).

55-62 (TAGGNGKT) is an ATP binding site.

This sequence belongs to the LpxK family.

The catalysed reaction is a lipid A disaccharide + ATP = a lipid IVA + ADP + H(+). It functions in the pathway glycolipid biosynthesis; lipid IV(A) biosynthesis; lipid IV(A) from (3R)-3-hydroxytetradecanoyl-[acyl-carrier-protein] and UDP-N-acetyl-alpha-D-glucosamine: step 6/6. Its function is as follows. Transfers the gamma-phosphate of ATP to the 4'-position of a tetraacyldisaccharide 1-phosphate intermediate (termed DS-1-P) to form tetraacyldisaccharide 1,4'-bis-phosphate (lipid IVA). The polypeptide is Tetraacyldisaccharide 4'-kinase (Escherichia coli (strain SMS-3-5 / SECEC)).